A 132-amino-acid chain; its full sequence is Secreted RxLR effector protein RXLR-C22 (132 aa).

An N-terminal signal peptide occupies residues 1–21 (MRSLVWAVIATLIVLTPFSEA). Residues 56–74 (RKLQSDSVKKGDSTGLEER) carry the RxLR-dEER motif. Asn116 is a glycosylation site (N-linked (GlcNAc...) asparagine).

Belongs to the RxLR effector family.

The protein resides in the secreted. The protein localises to the host Golgi apparatus. Its function is as follows. Secreted effector that does not suppress pattern-triggered immunity (PTI) in plant host. This Plasmopara halstedii (Downy mildew of sunflower) protein is Secreted RxLR effector protein RXLR-C22.